Consider the following 339-residue polypeptide: tRNA N6-adenosine threonylcarbamoyltransferase (339 aa).

Positions 111 and 115 each coordinate Fe cation. Substrate is bound by residues 139–143, Asp-172, Gly-185, Asp-189, and Asn-280; that span reads LVSGG. Asp-308 is a binding site for Fe cation.

The protein belongs to the KAE1 / TsaD family. It depends on Fe(2+) as a cofactor.

The protein resides in the cytoplasm. The enzyme catalyses L-threonylcarbamoyladenylate + adenosine(37) in tRNA = N(6)-L-threonylcarbamoyladenosine(37) in tRNA + AMP + H(+). Required for the formation of a threonylcarbamoyl group on adenosine at position 37 (t(6)A37) in tRNAs that read codons beginning with adenine. Is involved in the transfer of the threonylcarbamoyl moiety of threonylcarbamoyl-AMP (TC-AMP) to the N6 group of A37, together with TsaE and TsaB. TsaD likely plays a direct catalytic role in this reaction. This chain is tRNA N6-adenosine threonylcarbamoyltransferase, found in Bacteroides thetaiotaomicron (strain ATCC 29148 / DSM 2079 / JCM 5827 / CCUG 10774 / NCTC 10582 / VPI-5482 / E50).